A 578-amino-acid polypeptide reads, in one-letter code: SWR1 complex bromodomain subunit bdf1 (578 aa).

The segment covering 1-18 (MSSESRENEVKAETKDEI) has biased composition (basic and acidic residues). 3 disordered regions span residues 1-89 (MSSE…PPPQ), 192-254 (DAEQ…RKNN), and 504-578 (ADSS…SESA). Residues 22-36 (GSPQLNGDNNIQSSD) show a composition bias toward polar residues. Basic and acidic residues-rich tracts occupy residues 37 to 52 (GHNDENEESLSRKRDS) and 60 to 77 (LKQEEKESMPKKEPEPTV). A Bromo 1 domain is found at 84–190 (GMPPPQQKYC…EVFERQLKQL (107 aa)). A compositionally biased stretch (low complexity) spans 219 to 242 (NSSVSSTSASVAASTAPKAASPAV). Phosphoserine occurs at positions 221, 223, and 224. Residue threonine 225 is modified to Phosphothreonine. Phosphoserine is present on residues serine 226 and serine 239. The Bromo 2 domain occupies 251 to 360 (RKNNSQMRFC…NVFKEKWEAR (110 aa)). The region spanning 430–510 (RRDLTKEYGP…KPDADSSEPA (81 aa)) is the NET domain. The residue at position 511 (serine 511) is a Phosphoserine. Positions 526 to 537 (VLSETEQAEKIR) are enriched in basic and acidic residues. Over residues 550 to 563 (TSPTSPESNNAANV) the composition is skewed to polar residues. Positions 566 to 578 (SESDNESESSESA) are enriched in acidic residues.

This sequence belongs to the BET family. As to quaternary structure, component of the SWR1 chromatin-remodeling complex.

It is found in the nucleus. Functionally, component of the SWR1 complex which mediates the ATP-dependent exchange of histone H2A for the H2A variant HZT1 leading to transcriptional regulation of selected genes by chromatin remodeling. The polypeptide is SWR1 complex bromodomain subunit bdf1 (bdf1) (Schizosaccharomyces pombe (strain 972 / ATCC 24843) (Fission yeast)).